Here is a 259-residue protein sequence, read N- to C-terminus: Sugar fermentation stimulation protein homolog (259 aa).

The protein belongs to the SfsA family.

This chain is Sugar fermentation stimulation protein homolog, found in Prochlorococcus marinus (strain MIT 9303).